The sequence spans 720 residues: Protein unc-112 (720 aa).

2 disordered regions span residues 145 to 170 (DLRR…ESVG) and 210 to 236 (MGTL…TMRR). The region spanning 288–614 (WLDSSRSLME…ALPEHGIHYF (327 aa)) is the FERM domain. One can recognise a PH domain in the interval 402 to 507 (VPELADYLKY…WMAACRLASR (106 aa)).

The protein belongs to the kindlin family. In terms of assembly, interacts with pat-4/ILK. Probably forms a complex with pat-4 and pat-6. Component of an integrin containing attachment complex, composed of at least pat-2, pat-3, pat-4, pat-6, unc-52, unc-97 and unc-112. In terms of tissue distribution, mainly expressed in muscle cells in both embryos and adults.

The protein resides in the cell membrane. The protein localises to the cytoplasm. Its subcellular location is the myofibril. It is found in the sarcomere. It localises to the m line. In terms of biological role, component of an integrin containing attachment complex, which is required for muscle development and maintenance. Probable regulator of cell-extracellular matrix adhesion. Required during initial muscle assembly to form dense bodies and M-lines. The polypeptide is Protein unc-112 (Caenorhabditis elegans).